The sequence spans 437 residues: Adenosylhomocysteinase (437 aa).

The substrate site is built by Thr-54, Asp-130, and Glu-155. An NAD(+)-binding site is contributed by 156–158 (TTT). Residues Lys-185 and Asp-189 each coordinate substrate. NAD(+)-binding positions include Asn-190, 219-224 (GYGDVG), Glu-242, Asn-277, 298-300 (IGH), and Asn-345.

It belongs to the adenosylhomocysteinase family. In terms of assembly, homotetramer. NAD(+) serves as cofactor.

It localises to the cytoplasm. The enzyme catalyses S-adenosyl-L-homocysteine + H2O = L-homocysteine + adenosine. The protein operates within amino-acid biosynthesis; L-homocysteine biosynthesis; L-homocysteine from S-adenosyl-L-homocysteine: step 1/1. Functionally, adenosylhomocysteine is a competitive inhibitor of S-adenosyl-L-methionine-dependent methyl transferase reactions; therefore adenosylhomocysteinase may play a key role in the control of methylations via regulation of the intracellular concentration of adenosylhomocysteine. The sequence is that of Adenosylhomocysteinase from Leishmania donovani.